Here is a 672-residue protein sequence, read N- to C-terminus: Zinc finger and BTB domain-containing protein 24 (672 aa).

Residues 39–105 enclose the BTB domain; the sequence is CDITLIVEDV…MYSAVVLVDE (67 aa). Residues 136 to 208 form a disordered region; that stretch reads HMQVKRKRGR…GKRKIKQPIR (73 aa). The a.T hook 1 DNA-binding region spans 140–152; the sequence is KRKRGRPKKNQDL. A compositionally biased stretch (basic and acidic residues) spans 148 to 158; sequence KNQDLSQKENP. A compositionally biased stretch (polar residues) spans 160–171; it reads SELQAQTSSEIQ. Residues 198–208 are compositionally biased toward basic residues; sequence EGKRKIKQPIR. The a.T hook 2 DNA-binding region spans 223–235; the sequence is PGKRGRRRKYPDT. 8 consecutive C2H2-type zinc fingers follow at residues 237–259, 265–287, 293–315, 321–343, 349–371, 377–399, 405–427, and 433–455; these read ARCEECGKVFKSHLFLKIHQRTH, FRCSVCGKEFTQKHTLLVHQRMH, YICTVCSKALSTKHSLLEHMNLH, FTCEECGKSFSQQRQLKSHNRVH, PECAECHHKFMDAAQLKKHLRTH, FTCEICGKCFTAKSTLQTHIRIH, YVCKVCDKTFSDPSARRRHEVSH, and FSCSICKVSFARKDNLKAHIKTH. Positions 453 to 492 are disordered; the sequence is KTHNKENPPAQAESTDKPPQSAPEQQEQEQQQQQQTSGDK. Low complexity predominate over residues 476–487; it reads EQQEQEQQQQQQ.

This sequence belongs to the krueppel C2H2-type zinc-finger protein family.

It localises to the nucleus. Its function is as follows. May be involved in BMP2-induced transcription. The chain is Zinc finger and BTB domain-containing protein 24 (zbtb24) from Danio rerio (Zebrafish).